The sequence spans 141 residues: Hemoglobin subunit alpha (141 aa).

The region spanning 1 to 141 (VLSSKDKTNV…VSTVLTSKYR (141 aa)) is the Globin domain. Residue Ser-3 is modified to Phosphoserine. Lys-7 is modified (N6-succinyllysine). The residue at position 8 (Thr-8) is a Phosphothreonine. Position 11 is an N6-succinyllysine (Lys-11). N6-acetyllysine; alternate is present on Lys-16. Lys-16 is modified (N6-succinyllysine; alternate). At Tyr-24 the chain carries Phosphotyrosine. Lys-40 bears the N6-succinyllysine mark. Ser-49 carries the phosphoserine modification. His-58 is a binding site for O2. His-87 lines the heme b pocket. Position 102 is a phosphoserine (Ser-102). At Thr-108 the chain carries Phosphothreonine. The residue at position 124 (Ser-124) is a Phosphoserine. Thr-134 and Thr-137 each carry phosphothreonine. Ser-138 bears the Phosphoserine mark.

The protein belongs to the globin family. In terms of assembly, heterotetramer of two alpha chains and two beta chains. Red blood cells.

In terms of biological role, involved in oxygen transport from the lung to the various peripheral tissues. Hemopressin acts as an antagonist peptide of the cannabinoid receptor CNR1. Hemopressin-binding efficiently blocks cannabinoid receptor CNR1 and subsequent signaling. This Camelus dromedarius (Dromedary) protein is Hemoglobin subunit alpha (HBA).